A 125-amino-acid polypeptide reads, in one-letter code: Large ribosomal subunit protein bL12 (125 aa).

It belongs to the bacterial ribosomal protein bL12 family. Homodimer. Part of the ribosomal stalk of the 50S ribosomal subunit. Forms a multimeric L10(L12)X complex, where L10 forms an elongated spine to which 2 to 4 L12 dimers bind in a sequential fashion. Binds GTP-bound translation factors.

Its function is as follows. Forms part of the ribosomal stalk which helps the ribosome interact with GTP-bound translation factors. Is thus essential for accurate translation. This chain is Large ribosomal subunit protein bL12, found in Bradyrhizobium sp. (strain BTAi1 / ATCC BAA-1182).